The chain runs to 221 residues: 2-amino-5-formylamino-6-ribosylaminopyrimidin-4(3H)-one 5'-monophosphate deformylase (221 aa).

Residues Glu29, His31, Asp40, and His108 each contribute to the Fe cation site.

The protein belongs to the creatininase superfamily. FAPy deformylase family. Homodimer. Fe(2+) serves as cofactor. It depends on Zn(2+) as a cofactor.

It catalyses the reaction 2-amino-5-formylamino-6-(5-phospho-D-ribosylamino)pyrimidin-4(3H)-one + H2O = 2,5-diamino-6-(1-D-ribosylamino)pyrimidin-4(3H)-one 5'-phosphate + formate + H(+). Its pathway is cofactor biosynthesis; coenzyme F420 biosynthesis. It functions in the pathway cofactor biosynthesis; riboflavin biosynthesis. Functionally, catalyzes the hydrolysis of the formamide of 2-amino-5-formylamino-6-ribosylamino-4(3H)-pyrimidinone 5'-monophosphate (FAPy) to form 2,5-diamino-6-ribosylamino-4(3H)-pyrimidinone 5'-phosphate (APy). The polypeptide is 2-amino-5-formylamino-6-ribosylaminopyrimidin-4(3H)-one 5'-monophosphate deformylase (Methanococcus maripaludis (strain C5 / ATCC BAA-1333)).